Reading from the N-terminus, the 336-residue chain is Probable G-protein coupled receptor 160 (336 aa).

At 1 to 21 the chain is on the extracellular side; sequence MTALPSKNCSFQYQSHQAPRS. Residue asparagine 8 is glycosylated (N-linked (GlcNAc...) asparagine). A helical transmembrane segment spans residues 22–42; sequence LDATCLLLLIILGKVLLNVLI. Residues 43–56 lie on the Cytoplasmic side of the membrane; the sequence is LRVKRKDTSWSFME. The chain crosses the membrane as a helical span at residues 57 to 77; it reads YFCFSLALVDLLLLVNISVLT. Residues 78 to 95 are Extracellular-facing; the sequence is YFRDFVVLGIRFTNYHIC. A helical transmembrane segment spans residues 96–116; that stretch reads LLTQIVSFAYGFLHYPVCSLA. The Cytoplasmic segment spans residues 117–136; it reads CIDYWCNLSRATKPSSRWQK. Residues 137-157 form a helical membrane-spanning segment; that stretch reads LLYLLTVILTWISVLAYVLGD. Residues 158-187 are Extracellular-facing; it reads PAISASLKTHKTSVNQCPSYVSTQSHWLSL. A helical transmembrane segment spans residues 188–208; that stretch reads SMLMILSVAFLISWQEVVALI. Residues 209–243 lie on the Cytoplasmic side of the membrane; sequence QAIRIASYKNKAVLYFPFPPHTSYTVSPRAVLLPR. Residues 244–264 traverse the membrane as a helical segment; that stretch reads LIVCFLGTWFPFVALQVLILS. Residues 265 to 272 are Extracellular-facing; it reads LRVQIPAY. The helical transmembrane segment at 273–293 threads the bilayer; the sequence is IEMNVPWLYFVNSFLIAAVYW. Residues 294 to 336 are Cytoplasmic-facing; the sequence is FNCHKLYWRDGMFPVDPFINWKCCFVPVHRLKQVERPMSIIIC.

It belongs to the G-protein coupled receptor 1 family.

It is found in the cell membrane. Orphan receptor. The protein is Probable G-protein coupled receptor 160 (Gpr160) of Rattus norvegicus (Rat).